Reading from the N-terminus, the 294-residue chain is Nucleoside-specific channel-forming protein Tsx (294 aa).

Positions 1–22 are cleaved as a signal peptide; that stretch reads MKKTLLAAGAVVALSTTFAAGA.

Belongs to the nucleoside-specific channel-forming outer membrane porin (Tsx) (TC 1.B.10) family.

Its subcellular location is the cell outer membrane. Functionally, functions as a substrate-specific channel for nucleosides and deoxynucleosides. Also functions in albicidin uptake and as receptor for colicin K. Also is a receptor for several Tsx-specific bacteriophages. In Klebsiella pneumoniae, this protein is Nucleoside-specific channel-forming protein Tsx.